The following is a 571-amino-acid chain: Glutamine--tRNA ligase (571 aa).

A 'HIGH' region motif is present at residues 35 to 45 (PEPNGYLHIGH). ATP is bound by residues 36-38 (EPN) and 42-48 (HIGHAKS). The L-glutamine site is built by D68 and Y213. Residues T232, 262-263 (RL), and 270-272 (LSK) contribute to the ATP site. The 'KMSKS' region signature appears at 269–273 (ILSKR).

It belongs to the class-I aminoacyl-tRNA synthetase family. In terms of assembly, monomer.

It is found in the cytoplasm. The catalysed reaction is tRNA(Gln) + L-glutamine + ATP = L-glutaminyl-tRNA(Gln) + AMP + diphosphate. The sequence is that of Glutamine--tRNA ligase from Buchnera aphidicola subsp. Acyrthosiphon pisum (strain 5A).